Consider the following 185-residue polypeptide: uncharacterized protein (185 aa).

Transmembrane regions (helical) follow at residues M1–A19 and A105–V125.

It localises to the membrane. This is an uncharacterized protein from Caenorhabditis elegans.